The sequence spans 437 residues: Trigger factor (437 aa).

A PPIase FKBP-type domain is found at 161–246 (DDQVNIDFVG…VNSVSAPVLP (86 aa)).

This sequence belongs to the FKBP-type PPIase family. Tig subfamily.

It localises to the cytoplasm. The enzyme catalyses [protein]-peptidylproline (omega=180) = [protein]-peptidylproline (omega=0). Functionally, involved in protein export. Acts as a chaperone by maintaining the newly synthesized protein in an open conformation. Functions as a peptidyl-prolyl cis-trans isomerase. The protein is Trigger factor of Pseudomonas putida (strain ATCC 47054 / DSM 6125 / CFBP 8728 / NCIMB 11950 / KT2440).